A 168-amino-acid polypeptide reads, in one-letter code: G/U mismatch-specific DNA glycosylase (168 aa).

The protein belongs to the uracil-DNA glycosylase (UDG) superfamily. TDG/mug family. Binds DNA as a monomer.

The protein localises to the cytoplasm. It carries out the reaction Specifically hydrolyzes mismatched double-stranded DNA and polynucleotides, releasing free uracil.. Functionally, excises ethenocytosine and uracil, which can arise by alkylation or deamination of cytosine, respectively, from the corresponding mispairs with guanine in ds-DNA. It is capable of hydrolyzing the carbon-nitrogen bond between the sugar-phosphate backbone of the DNA and the mispaired base. The complementary strand guanine functions in substrate recognition. Required for DNA damage lesion repair in stationary-phase cells. The chain is G/U mismatch-specific DNA glycosylase from Salmonella paratyphi B (strain ATCC BAA-1250 / SPB7).